Reading from the N-terminus, the 383-residue chain is Transcription factor Y1 (383 aa).

2 consecutive HTH myb-type domains span residues 9-61 (KVGL…INYL) and 62-116 (RADV…SRQI). DNA-binding regions (H-T-H motif) lie at residues 37–61 (WRSLPKNAGLLRCGKSCRLRWINYL) and 89–112 (WSLIASHFPGRTDNEIKNYWNSHL). Residues 136–250 (SKLHSAEKRR…DATGPWELDP (115 aa)) form a disordered region. Low complexity-rich tracts occupy residues 155 to 170 (KSSSANTTTNTTSSKT) and 191 to 207 (ASSPPTAATTTSAASSP).

It is found in the nucleus. The protein operates within pigment biosynthesis. Transcription factor involved in regulating the biosynthetic pathway of flavan-4-ol-derived red phlobaphene and red-brown 3-deoxyanthocyanidin (3-DA) pigments. Regulates transcription of chalcone synthase, chalcone isomerase, dihydroflavonol reductase and flavonoid 3'-hydroxylase genes required for the phlobaphene and 3-DA biosynthesis. Transcription of these genes is activated in mesocotyls in response to ingress of non-pathogenic fungus C.heterostrophus. Regulates the production of 3-DA phytoalexins (luteolinidin, 5-methoxyluteolinidin, apigeninidin and 7-methoxyapigeninidin) in mesocotyls in response to C.heterostrophus and corn leaf aphid (CLA) R.maidis. Involved in resistance against anthracnose leaf blight (ALB) caused by the pathogenic C.sublineolum fungus by inducing the production of 3-DA phytoalexins. Confers resistance, also by inducing the production of 3-DA phytoalexins, against CLA R.maidis, which is an insect and a pest. This Sorghum bicolor (Sorghum) protein is Transcription factor Y1.